The chain runs to 350 residues: Anthranilate phosphoribosyltransferase (350 aa).

Residues G93, 96 to 97 (GD), T101, 103 to 106 (NIST), 121 to 129 (KHGNRSASG), and S133 contribute to the 5-phospho-alpha-D-ribose 1-diphosphate site. G93 contributes to the anthranilate binding site. S105 contributes to the Mg(2+) binding site. N124 contributes to the anthranilate binding site. R179 is an anthranilate binding site. Residues D238 and E239 each coordinate Mg(2+).

It belongs to the anthranilate phosphoribosyltransferase family. As to quaternary structure, homodimer. Requires Mg(2+) as cofactor.

The catalysed reaction is N-(5-phospho-beta-D-ribosyl)anthranilate + diphosphate = 5-phospho-alpha-D-ribose 1-diphosphate + anthranilate. It participates in amino-acid biosynthesis; L-tryptophan biosynthesis; L-tryptophan from chorismate: step 2/5. Functionally, catalyzes the transfer of the phosphoribosyl group of 5-phosphorylribose-1-pyrophosphate (PRPP) to anthranilate to yield N-(5'-phosphoribosyl)-anthranilate (PRA). The polypeptide is Anthranilate phosphoribosyltransferase (Parasynechococcus marenigrum (strain WH8102)).